The following is a 414-amino-acid chain: Coenzyme A biosynthesis bifunctional protein CoaBC (414 aa).

The tract at residues 1–191 (MSARKRIVVG…ALPYDMAGVK (191 aa)) is phosphopantothenoylcysteine decarboxylase. The phosphopantothenate--cysteine ligase stretch occupies residues 192-414 (ALVTAGGTRE…IAAFLKSQDG (223 aa)). CTP is bound by residues 275 to 277 (MAA), Asp281, Lys291, 293 to 294 (KK), 308 to 311 (DDVL), Phe332, Lys350, and Lys354.

It in the N-terminal section; belongs to the HFCD (homo-oligomeric flavin containing Cys decarboxylase) superfamily. In the C-terminal section; belongs to the PPC synthetase family. In terms of assembly, homododecamer. Mg(2+) serves as cofactor. FMN is required as a cofactor.

It carries out the reaction N-[(R)-4-phosphopantothenoyl]-L-cysteine + H(+) = (R)-4'-phosphopantetheine + CO2. The catalysed reaction is (R)-4'-phosphopantothenate + L-cysteine + CTP = N-[(R)-4-phosphopantothenoyl]-L-cysteine + CMP + diphosphate + H(+). It functions in the pathway cofactor biosynthesis; coenzyme A biosynthesis; CoA from (R)-pantothenate: step 2/5. It participates in cofactor biosynthesis; coenzyme A biosynthesis; CoA from (R)-pantothenate: step 3/5. With respect to regulation, two related chemical scaffolds that potently inhibit the activity of the CoaB moiety of CoaBC through a cryptic allosteric site that sits in the dimer interface region of the CoaB enzyme were identified. Functionally, catalyzes two sequential steps in the biosynthesis of coenzyme A. In the first step cysteine is conjugated to 4'-phosphopantothenate to form 4-phosphopantothenoylcysteine. In the second step the latter compound is decarboxylated to form 4'-phosphopantotheine. This Mycolicibacterium smegmatis (strain ATCC 700084 / mc(2)155) (Mycobacterium smegmatis) protein is Coenzyme A biosynthesis bifunctional protein CoaBC.